A 187-amino-acid chain; its full sequence is ATP synthase subunit b (187 aa).

The chain crosses the membrane as a helical span at residues 4–24 (LALFALLMVPAILLASGHDSG).

The protein belongs to the ATPase B chain family. F-type ATPases have 2 components, F(1) - the catalytic core - and F(0) - the membrane proton channel. F(1) has five subunits: alpha(3), beta(3), gamma(1), delta(1), epsilon(1). F(0) has three main subunits: a(1), b(2) and c(10-14). The alpha and beta chains form an alternating ring which encloses part of the gamma chain. F(1) is attached to F(0) by a central stalk formed by the gamma and epsilon chains, while a peripheral stalk is formed by the delta and b chains.

The protein resides in the cell inner membrane. Functionally, f(1)F(0) ATP synthase produces ATP from ADP in the presence of a proton or sodium gradient. F-type ATPases consist of two structural domains, F(1) containing the extramembraneous catalytic core and F(0) containing the membrane proton channel, linked together by a central stalk and a peripheral stalk. During catalysis, ATP synthesis in the catalytic domain of F(1) is coupled via a rotary mechanism of the central stalk subunits to proton translocation. Its function is as follows. Component of the F(0) channel, it forms part of the peripheral stalk, linking F(1) to F(0). In Sulfurovum sp. (strain NBC37-1), this protein is ATP synthase subunit b.